The sequence spans 310 residues: MKRIQIIDSHTGGEPTRLVVSGFPSLGRGTMAERRDVLAREHDRYRTACILEPRGSDVMVGALLCDPVAPDAAAGVIFFNNSGYLGMCGHGTIGVVRTLHHMGRIEPGVHRIETPVGTVEATLHDDLSVSVRNVPAYRHAQGVVLDVPGYGPVKGDIAWGGNWFFLISDHGQRVAGDNVAALTAYASAVREGLERAGITGANGGEIDHIELFADDPEHDSRSFVLCPGLAYDRSPCGTGTSAKLACLAADGKLAPGVVWRQASVIGSVFHASYELADGGIVPTIRGSAHLSAEATLLIDEDDPFGWGIGS.

The active-site Proton acceptor is C88. Residues 89–90, H208, and D232 contribute to the substrate site; that span reads GH. Catalysis depends on C236, which acts as the Proton donor. Residue 237-238 coordinates substrate; sequence GT.

The protein belongs to the proline racemase family. As to quaternary structure, homodimer.

The enzyme catalyses trans-4-hydroxy-L-proline = cis-4-hydroxy-D-proline. Allows intracellular utilization of 4-hydroxyproline, one of the major constituents of host collagen, by converting 4-hydroxy-L-proline to 4-hydroxy-D-proline, which can be further metabolized by intracellular 4-hydroxy-D-proline oxidases. The sequence is that of 4-hydroxyproline epimerase from Burkholderia cenocepacia (strain HI2424).